We begin with the raw amino-acid sequence, 495 residues long: Probable cytosol aminopeptidase (495 aa).

Mn(2+) is bound by residues lysine 266 and aspartate 271. Lysine 278 is an active-site residue. Mn(2+) is bound by residues aspartate 289, aspartate 348, and glutamate 350. Arginine 352 is an active-site residue.

The protein belongs to the peptidase M17 family. The cofactor is Mn(2+).

The protein resides in the cytoplasm. The enzyme catalyses Release of an N-terminal amino acid, Xaa-|-Yaa-, in which Xaa is preferably Leu, but may be other amino acids including Pro although not Arg or Lys, and Yaa may be Pro. Amino acid amides and methyl esters are also readily hydrolyzed, but rates on arylamides are exceedingly low.. The catalysed reaction is Release of an N-terminal amino acid, preferentially leucine, but not glutamic or aspartic acids.. Presumably involved in the processing and regular turnover of intracellular proteins. Catalyzes the removal of unsubstituted N-terminal amino acids from various peptides. The polypeptide is Probable cytosol aminopeptidase (Pseudomonas aeruginosa (strain LESB58)).